An 838-amino-acid polypeptide reads, in one-letter code: MGKKGKVGKSRRDKFYHLAKETGYRSRSAFKLIQLNRRFQFLQKARALLDLCAAPGGWLQVAAKFMPVSSLIVGVDLVPIKPLPNVVTLQEDITTERCRQALRKELKTWKVDVVLNDGAPNVGASWVHDAYSQAHLTLMALRLACDFLARGGCFITKVFRSRDYQPLLWIFQQLFHRVQATKPQASRHESAEIFVVCQGFLAPDKVDAKFFDPKFAFKEVEVQAKTVTELVTKKKPKAEGYAEGDLTLYHRTSVTDFLRAANPVDFLSKASEISIDDEELAQHPATTEDIRVCCQDIKVLGRKELRSLLNWRTKLRRYVAKKLKEQAKALDISLSSEEEEEGDEEEAVAETKQAPEEEEEREEEQLNRTLAEMKAQEVAELKRKKKKLLREQRKQRERVELKMDLPGVSIADEGETGMFSLRTIRGQQLLEEVTQGDMNAADTFLSDLPRDDIYVSDAEDDDDTSLESDLDPEELAGVRTHSDLKEQKYLRFTQVDDNKEEEGENPLLVPLEEKAVLQEEQASLWFSKDGFSGIEDDADEALEISQAQLLYKSRQKEQQPTDPPPPPTNLKTEKKSPQGQNEVPKETEAILGTEAVTDPGGEERGNSSDSDSSSSEDEDSWKVSRGVKRGRGSKADEDGFEVVPIQDPVKYRILDPEGLALGAVIASSKKAKRDLIDNSFNRYAFNEEEGELPEWFAQEEKQHRIRQLPVDKKEVEHYRKRWREINARPIKKVAEAKARKKRRVLKKLEQTKKKAEAVVNTVDISEREKVAQLRSLYKKAGLGKEKRQVTYVVAKKGVGRKVRRPAGVKGHFKVVDSRMKKDQRAQQRKEQKKKHKRK.

Positions 56, 58, 76, 92, and 117 each coordinate S-adenosyl-L-methionine. Lysine 157 serves as the catalytic Proton acceptor. The segment at 332-367 (ISLSSEEEEEGDEEEAVAETKQAPEEEEEREEEQLN) is disordered. Phosphoserine occurs at positions 333, 335, and 336. Over residues 336–348 (SEEEEEGDEEEAV) the composition is skewed to acidic residues. Arginine 390 bears the Citrulline mark. A disordered region spans residues 453–482 (IYVSDAEDDDDTSLESDLDPEELAGVRTHS). The segment covering 457–474 (DAEDDDDTSLESDLDPEE) has biased composition (acidic residues). 2 positions are modified to phosphoserine: serine 532 and serine 545. The segment at 537–639 (DADEALEISQ…GRGSKADEDG (103 aa)) is disordered. Lysine 571 is covalently cross-linked (Glycyl lysine isopeptide (Lys-Gly) (interchain with G-Cter in SUMO2)). Position 576 is a phosphoserine (serine 576). Glycyl lysine isopeptide (Lys-Gly) (interchain with G-Cter in SUMO2) cross-links involve residues lysine 634 and lysine 650. Serine 667 bears the Phosphoserine mark. A Glycyl lysine isopeptide (Lys-Gly) (interchain with G-Cter in SUMO2) cross-link involves residue lysine 669. Serine 679 is modified (phosphoserine). Lysine 701 is covalently cross-linked (Glycyl lysine isopeptide (Lys-Gly) (interchain with G-Cter in SUMO2)). Residues 730–768 (IKKVAEAKARKKRRVLKKLEQTKKKAEAVVNTVDISERE) adopt a coiled-coil conformation. Arginine 774 carries the post-translational modification Citrulline. Residues 802-812 (VRRPAGVKGHF) show a composition bias toward basic residues. A disordered region spans residues 802 to 838 (VRRPAGVKGHFKVVDSRMKKDQRAQQRKEQKKKHKRK). Residues 813-829 (KVVDSRMKKDQRAQQRK) are compositionally biased toward basic and acidic residues.

This sequence belongs to the class I-like SAM-binding methyltransferase superfamily. RNA methyltransferase RlmE family. SPB1 subfamily. In terms of assembly, interacts with NIP7. In terms of processing, citrullinated by PADI4.

The protein localises to the nucleus. It localises to the nucleolus. It catalyses the reaction a ribonucleotide in rRNA + S-adenosyl-L-methionine = a 2'-O-methylribonucleotide in rRNA + S-adenosyl-L-homocysteine + H(+). RNA 2'-O-methyltransferase involved in the processing of the 34S pre-rRNA to 18S rRNA and in 40S ribosomal subunit formation. This chain is pre-rRNA 2'-O-ribose RNA methyltransferase FTSJ3 (Ftsj3), found in Mus musculus (Mouse).